Reading from the N-terminus, the 44-residue chain is Thymosin beta-10 (44 aa).

2 stretches are compositionally biased toward basic and acidic residues: residues 1–25 (MADK…ETQE) and 33–44 (ETIEQEKRSEIS). The interval 1–44 (MADKPDMGEIASFDKAKLKKTETQEKNTLPTKETIEQEKRSEIS) is disordered. Alanine 2 bears the N-acetylalanine mark. Position 4 is an N6-acetyllysine (lysine 4). Serine 12 is subject to Phosphoserine. Lysine 15 carries the N6-acetyllysine modification. Threonine 21, threonine 23, and threonine 34 each carry phosphothreonine. At lysine 39 the chain carries N6-acetyllysine. Serine 41 carries the post-translational modification Phosphoserine.

Belongs to the thymosin beta family.

The protein resides in the cytoplasm. The protein localises to the cytoskeleton. Plays an important role in the organization of the cytoskeleton. Binds to and sequesters actin monomers (G actin) and therefore inhibits actin polymerization. The protein is Thymosin beta-10 (Tmsb10) of Rattus norvegicus (Rat).